The primary structure comprises 3078 residues: Probable polyketide synthase 44 (3078 aa).

The Ketosynthase family 3 (KS3) domain maps to 10–435 (DNDVAIIGIG…GSNACLILTE (426 aa)). Catalysis depends on for beta-ketoacyl synthase activity residues Cys-175, His-320, and His-358. The tract at residues 627–660 (GILASISIGHSLGEVSSAVCSGMIDLETGCFIIY) is acyl/malonyl transferase. Catalysis depends on Ser-637, which acts as the For acyl/malonyl transferase activity. Residues 952–1072 (TNHLGYRNER…GRLSTTKHND (121 aa)) form an N-terminal hotdog fold region. In terms of domain architecture, PKS/mFAS DH spans 952 to 1239 (TNHLGYRNER…YTQLTPYKNQ (288 aa)). His-984 (proton acceptor; for dehydratase activity) is an active-site residue. Residues 1088-1239 (NFVTIQKKEL…YTQLTPYKNQ (152 aa)) form a C-terminal hotdog fold region. The active-site Proton donor; for dehydratase activity is Asp-1150. The stretch at 2080 to 2119 (LENIKTDLSNKNDNNNNNNNNNNDNKESNIKELLDNDDDE) forms a coiled coil. The interval 2087-2108 (LSNKNDNNNNNNNNNNDNKESN) is disordered. Low complexity predominate over residues 2090–2102 (KNDNNNNNNNNNN). Positions 2558 to 2636 (SDDLSIREQI…QLIQSVTDAM (79 aa)) constitute a Carrier domain. The residue at position 2596 (Ser-2596) is an O-(pantetheine 4'-phosphoryl)serine. The helical transmembrane segment at 2694–2714 (NTVFLTGSSGFIGIYILFYLI) threads the bilayer.

Pantetheine 4'-phosphate is required as a cofactor.

Its subcellular location is the membrane. Its function is as follows. Probable polyketide synthase. This Dictyostelium discoideum (Social amoeba) protein is Probable polyketide synthase 44 (pks44).